A 222-amino-acid polypeptide reads, in one-letter code: UPF0502 protein Lcho_2066 (222 aa).

This sequence belongs to the UPF0502 family.

This Leptothrix cholodnii (strain ATCC 51168 / LMG 8142 / SP-6) (Leptothrix discophora (strain SP-6)) protein is UPF0502 protein Lcho_2066.